Here is a 548-residue protein sequence, read N- to C-terminus: Leucine-rich repeat LGI family member 3 (548 aa).

Positions 1 to 30 (MAGLRARRGPAPGLLALSALGFCLMLQVSA) are cleaved as a signal peptide. Residues 31-64 (KRLPKTPPCPPSCSCTRDTAFCVDSKAVPRNLPS) form the LRRNT domain. LRR repeat units lie at residues 89–110 (LLQFLLLNSNKFTLIGDNAFTG), 113–134 (HLQYLFIENNDIWTLSKFTFRG), and 137–158 (SLTHLSLANNNLQTLPRDIFRP). The 51-residue stretch at 170–220 (NSLNCDCKVKWLVEWLAHTNTTVAPIYCASPPRFQEHKVQDLPLREFDCIT) folds into the LRRCT domain. A glycan (N-linked (GlcNAc...) asparagine) is linked at asparagine 189. 2 EAR repeats span residues 222–264 (DFVL…KWDY) and 268–310 (QLRD…HWDP). An N-linked (GlcNAc...) asparagine glycan is attached at asparagine 311. EAR repeat units follow at residues 314-361 (RFTK…RWHQ), 363-406 (GFYS…QWSR), 410-453 (QFVA…RWEG), 455-497 (RFSE…QWDE), and 501-543 (KFVR…RHVV). The N-linked (GlcNAc...) asparagine glycan is linked to asparagine 394.

Interacts with STX1A.

The protein resides in the secreted. The protein localises to the cytoplasmic vesicle. It localises to the secretory vesicle. Its subcellular location is the synaptic vesicle. It is found in the synapse. The protein resides in the synaptosome. In terms of biological role, may participate in the regulation of neuronal exocytosis. This Macaca fascicularis (Crab-eating macaque) protein is Leucine-rich repeat LGI family member 3 (LGI3).